The following is a 215-amino-acid chain: UPF0502 protein YceH (215 aa).

The residue at position 80 (Lys-80) is an N6-acetyllysine.

The protein belongs to the UPF0502 family.

In Shigella flexneri serotype 5b (strain 8401), this protein is UPF0502 protein YceH.